Consider the following 124-residue polypeptide: Small ribosomal subunit protein uS12 (124 aa).

At aspartate 89 the chain carries 3-methylthioaspartic acid.

The protein belongs to the universal ribosomal protein uS12 family. As to quaternary structure, part of the 30S ribosomal subunit. Contacts proteins S8 and S17. May interact with IF1 in the 30S initiation complex.

In terms of biological role, with S4 and S5 plays an important role in translational accuracy. Its function is as follows. Interacts with and stabilizes bases of the 16S rRNA that are involved in tRNA selection in the A site and with the mRNA backbone. Located at the interface of the 30S and 50S subunits, it traverses the body of the 30S subunit contacting proteins on the other side and probably holding the rRNA structure together. The combined cluster of proteins S8, S12 and S17 appears to hold together the shoulder and platform of the 30S subunit. This is Small ribosomal subunit protein uS12 from Klebsiella pneumoniae (strain 342).